A 416-amino-acid polypeptide reads, in one-letter code: Serine hydroxymethyltransferase (416 aa).

Residues Leu-118 and Gly-122–Leu-124 contribute to the (6S)-5,6,7,8-tetrahydrofolate site. Lys-226 carries the N6-(pyridoxal phosphate)lysine modification. Glu-242 contributes to the (6S)-5,6,7,8-tetrahydrofolate binding site.

Belongs to the SHMT family. In terms of assembly, homodimer. The cofactor is pyridoxal 5'-phosphate.

The protein resides in the cytoplasm. It catalyses the reaction (6R)-5,10-methylene-5,6,7,8-tetrahydrofolate + glycine + H2O = (6S)-5,6,7,8-tetrahydrofolate + L-serine. The protein operates within one-carbon metabolism; tetrahydrofolate interconversion. It functions in the pathway amino-acid biosynthesis; glycine biosynthesis; glycine from L-serine: step 1/1. In terms of biological role, catalyzes the reversible interconversion of serine and glycine with tetrahydrofolate (THF) serving as the one-carbon carrier. This reaction serves as the major source of one-carbon groups required for the biosynthesis of purines, thymidylate, methionine, and other important biomolecules. Also exhibits THF-independent aldolase activity toward beta-hydroxyamino acids, producing glycine and aldehydes, via a retro-aldol mechanism. In Helicobacter pylori (strain HPAG1), this protein is Serine hydroxymethyltransferase.